Here is a 259-residue protein sequence, read N- to C-terminus: Ubiquinone/menaquinone biosynthesis C-methyltransferase UbiE (259 aa).

S-adenosyl-L-methionine is bound by residues Thr-82, Asp-103, 131 to 132, and Ser-148; that span reads NA.

Belongs to the class I-like SAM-binding methyltransferase superfamily. MenG/UbiE family.

The enzyme catalyses a 2-demethylmenaquinol + S-adenosyl-L-methionine = a menaquinol + S-adenosyl-L-homocysteine + H(+). It catalyses the reaction a 2-methoxy-6-(all-trans-polyprenyl)benzene-1,4-diol + S-adenosyl-L-methionine = a 5-methoxy-2-methyl-3-(all-trans-polyprenyl)benzene-1,4-diol + S-adenosyl-L-homocysteine + H(+). It participates in quinol/quinone metabolism; menaquinone biosynthesis; menaquinol from 1,4-dihydroxy-2-naphthoate: step 2/2. The protein operates within cofactor biosynthesis; ubiquinone biosynthesis. Functionally, methyltransferase required for the conversion of demethylmenaquinol (DMKH2) to menaquinol (MKH2) and the conversion of 2-polyprenyl-6-methoxy-1,4-benzoquinol (DDMQH2) to 2-polyprenyl-3-methyl-6-methoxy-1,4-benzoquinol (DMQH2). The polypeptide is Ubiquinone/menaquinone biosynthesis C-methyltransferase UbiE (Vibrio campbellii (strain ATCC BAA-1116)).